Reading from the N-terminus, the 345-residue chain is MYHHDSGPHIEEVFDPPSRRTMMQEIETHPDVIAFGKKLRKIKNQPESTFLSSADRMEEIIDAFRDQIAKWEEEEELNEPCEYRQLKIEIFTQKKIEYQRKNNLAVDEFYKKRNLKNHSNRKPLEESRRREEPRDRVHESNIDITHRGDSTSLNHYSRHHYSQRQSQSSRFERERESDEEEENSQPIQRYRSRSPKPSYSYNQSTMQQSQRDDTNVYHRSHQSTSQPPQVRMRSGKSRVTKTHNRKFRPGQKALAEIRKYQKSTDMLIQKAPFVRLVHEIIREQTYKSQDYRIRADALMALQEAAEAFMVEMFEGSVLICNHAKRVTLMPTDIQLYRRLCLRNLS.

Residues 117 to 246 (NHSNRKPLEE…SRVTKTHNRK (130 aa)) form a disordered region. Residues 122–149 (KPLEESRRREEPRDRVHESNIDITHRGD) show a composition bias toward basic and acidic residues. The span at 233–246 (RSGKSRVTKTHNRK) shows a compositional bias: basic residues. Residues 263 to 340 (STDMLIQKAP…TDIQLYRRLC (78 aa)) are H3-like.

It belongs to the histone H3 family. Forms a nucleosome-like histone octamer containing two molecules each of H2A, H2B, cpar-1 and H4 assembled in one cpar-1-H4 heterotetramer and two H2A-H2B heterodimers. Cleaved at the onset of meiotic anaphase I, likely by separase sep-1.

It is found in the nucleus. Its subcellular location is the chromosome. Its function is as follows. Histone H3-like variant which exclusively replaces conventional H3 in the nucleosome core of centromeric chromatin at the inner plate of the kinetochore. Required for recruitment and assembly of kinetochore proteins, mitotic progression and chromosome segregation. May serve as an epigenetic mark that propagates centromere identity through replication and cell division. Not required for chromosome segregation during meiosis. The sequence is that of Histone H3-like centromeric protein cpar-1 from Caenorhabditis briggsae.